The chain runs to 583 residues: Tetratricopeptide repeat protein 39C (583 aa).

Positions 1-22 (MAGSEQQRPRRRDDGDSDAAAA) are disordered. TPR repeat units follow at residues 315–348 (SLFM…AVDQ), 353–386 (HVCL…SRWS), and 485–518 (GLKY…ELCR).

Belongs to the TTC39 family.

The polypeptide is Tetratricopeptide repeat protein 39C (TTC39C) (Homo sapiens (Human)).